The chain runs to 382 residues: Protein PEP-RELATED DEVELOPMENT ARRESTED 1 homolog, chloroplastic (382 aa).

The transit peptide at 1-44 directs the protein to the chloroplast; it reads MAILPLSISHSLTSALSATSSGIGRPVARLLHPRVPSRPTVICL.

The protein localises to the plastid. Its subcellular location is the chloroplast stroma. It is found in the chloroplast nucleoid. Its function is as follows. Plays an essential role in early steps of chloroplast development. May be involved in the redox control of plastid gene expression by maintening the redox state around chloroplast nucleoids. May positively regulate plastid-encoded RNA polymerase (PEP) activity. The protein is Protein PEP-RELATED DEVELOPMENT ARRESTED 1 homolog, chloroplastic of Oryza sativa subsp. japonica (Rice).